The primary structure comprises 350 residues: MFCCLGYEWLSGGCKTWHSAWVINTLADHRHRGTDFGGSPWLLIITVFLRSYKFAISLCTSYLCVSFLKTIFPSQNGHDGSTDVQQRARRSNRRRQEGIKIVLEDIFTLWRQVETKVRAKIRKMKVTTKVNRHDKINGKRKTAKEHLRKLSMKEREHGEKERQVSEAEENGKLDMKEIHTYMEMFQRAQALRRRAEDYYRCKITPSARKPLCNRVRMAAVEHRHSSGLPYWPYLTAETLKNRMGHQPPPPTQQHSIIDNSLSLKTPSECLLTPLPPSALPSADDNLKTPAECLLYPLPPSADDNLKTPPECLLTPLPPSAPPSVDDNLKTPPECVCSLPFHPQRMIISRN.

The disordered stretch occupies residues 306–325; sequence KTPPECLLTPLPPSAPPSVD.

Belongs to the NPIP family. May associate with the nuclear pore complex. As to expression, widely expressed.

It is found in the nucleus. Its subcellular location is the nuclear pore complex. It localises to the nucleus membrane. This Homo sapiens (Human) protein is Nuclear pore complex-interacting protein family member A1 (NPIPA1).